The following is a 775-amino-acid chain: Homoaconitase, mitochondrial (775 aa).

Residues 1 to 29 (MQSRLMPSGGPGRRWAFLRVPSTPQRRAF) constitute a mitochondrion transit peptide. Positions 392, 461, and 464 each coordinate [4Fe-4S] cluster.

Belongs to the aconitase/IPM isomerase family. Requires [4Fe-4S] cluster as cofactor.

Its subcellular location is the mitochondrion. The enzyme catalyses (2R,3S)-homoisocitrate = cis-homoaconitate + H2O. The protein operates within amino-acid biosynthesis; L-lysine biosynthesis via AAA pathway; L-alpha-aminoadipate from 2-oxoglutarate: step 3/5. In terms of biological role, catalyzes the reversible hydration of cis-homoaconitate to (2R,3S)-homoisocitrate, a step in the alpha-aminoadipate pathway for lysine biosynthesis. The chain is Homoaconitase, mitochondrial (lys4) from Aspergillus oryzae (strain ATCC 42149 / RIB 40) (Yellow koji mold).